Reading from the N-terminus, the 152-residue chain is ADP-ribose glycohydrolase OARD1 (152 aa).

Alanine 2 is subject to N-acetylalanine. The Macro domain occupies 2–152; that stretch reads AGSPNEDSEG…TDIRITVYTL (151 aa). The residue at position 4 (serine 4) is a Phosphoserine. Leucine 21 contacts substrate. Catalysis depends on lysine 84, which acts as the Nucleophile. Substrate-binding positions include 119 to 125 and leucine 152; that span reads RIGCGLD. Aspartate 125 serves as the catalytic Proton acceptor.

Its subcellular location is the nucleus. The protein localises to the nucleoplasm. It is found in the nucleolus. The protein resides in the chromosome. The enzyme catalyses 2''-O-acetyl-ADP-D-ribose + H2O = ADP-D-ribose + acetate + H(+). The catalysed reaction is 5-O-(ADP-D-ribosyl)-L-glutamyl-[protein] + H2O = L-glutamyl-[protein] + ADP-D-ribose + H(+). It catalyses the reaction alpha-NAD(+) + H2O = ADP-D-ribose + nicotinamide + H(+). With respect to regulation, subject to competitive inhibition by the product ADP-ribose. Functionally, ADP-ribose glycohydrolase that hydrolyzes ADP-ribose and acts on different substrates, such as proteins ADP-ribosylated on glutamate and O-acetyl-ADP-D-ribose. Specifically acts as a glutamate mono-ADP-ribosylhydrolase by mediating the removal of mono-ADP-ribose attached to glutamate residues on proteins. Does not act on poly-ADP-ribosylated proteins: the poly-ADP-ribose chain of poly-ADP-ribosylated glutamate residues must by hydrolyzed into mono-ADP-ribosylated glutamate by PARG to become a substrate for OARD1. Deacetylates O-acetyl-ADP ribose, a signaling molecule generated by the deacetylation of acetylated lysine residues in histones and other proteins. Catalyzes the deacylation of O-acetyl-ADP-ribose, O-propionyl-ADP-ribose and O-butyryl-ADP-ribose, yielding ADP-ribose plus acetate, propionate and butyrate, respectively. The polypeptide is ADP-ribose glycohydrolase OARD1 (Bos taurus (Bovine)).